A 73-amino-acid polypeptide reads, in one-letter code: Conotoxin Leo-O2 (73 aa).

The signal sequence occupies residues 1–22; that stretch reads MKLTCVLIIAVLFLTACQLVTA. Residues 23-47 constitute a propeptide that is removed on maturation; that stretch reads DYSGDEQQYRAMRLIDAMRNFGDTR. 3 disulfide bridges follow: Cys-49–Cys-59, Cys-56–Cys-64, and Cys-58–Cys-69.

The protein belongs to the conotoxin O1 superfamily. As to expression, expressed by the venom duct.

The protein resides in the secreted. In Conus leopardus (Leopard cone), this protein is Conotoxin Leo-O2.